The sequence spans 332 residues: GTP 3',8-cyclase (332 aa).

Positions 7-221 constitute a Radical SAM core domain; that stretch reads QYERLHDYVR…FDLCKQAGLD (215 aa). Arginine 16 contributes to the GTP binding site. [4Fe-4S] cluster contacts are provided by cysteine 23 and cysteine 27. Residue tyrosine 29 coordinates S-adenosyl-L-methionine. Cysteine 30 contributes to the [4Fe-4S] cluster binding site. Residue arginine 66 coordinates GTP. Glycine 70 is an S-adenosyl-L-methionine binding site. Position 97 (threonine 97) interacts with GTP. Serine 121 lines the S-adenosyl-L-methionine pocket. Lysine 158 lines the GTP pocket. Residue methionine 192 coordinates S-adenosyl-L-methionine. 2 residues coordinate [4Fe-4S] cluster: cysteine 256 and cysteine 259. Residue 261-263 participates in GTP binding; the sequence is RLR. Cysteine 273 is a [4Fe-4S] cluster binding site.

The protein belongs to the radical SAM superfamily. MoaA family. In terms of assembly, monomer and homodimer. It depends on [4Fe-4S] cluster as a cofactor.

The enzyme catalyses GTP + AH2 + S-adenosyl-L-methionine = (8S)-3',8-cyclo-7,8-dihydroguanosine 5'-triphosphate + 5'-deoxyadenosine + L-methionine + A + H(+). Its pathway is cofactor biosynthesis; molybdopterin biosynthesis. Catalyzes the cyclization of GTP to (8S)-3',8-cyclo-7,8-dihydroguanosine 5'-triphosphate. The sequence is that of GTP 3',8-cyclase from Limosilactobacillus fermentum (strain NBRC 3956 / LMG 18251) (Lactobacillus fermentum).